A 149-amino-acid chain; its full sequence is Interleukin-2 (149 aa).

The signal sequence occupies residues 1 to 20 (MYRMQLLSCIALTLAVLANS). A glycan (O-linked (GalNAc...) threonine) is linked at threonine 23. Cysteine 78 and cysteine 121 form a disulfide bridge. Residue asparagine 106 is glycosylated (N-linked (GlcNAc...) asparagine).

The protein belongs to the IL-2 family.

The protein resides in the secreted. Cytokine produced by activated CD4-positive helper T-cells and to a lesser extend activated CD8-positive T-cells and natural killer (NK) cells that plays pivotal roles in the immune response and tolerance. Binds to a receptor complex composed of either the high-affinity trimeric IL-2R (IL2RA/CD25, IL2RB/CD122 and IL2RG/CD132) or the low-affinity dimeric IL-2R (IL2RB and IL2RG). Interaction with the receptor leads to oligomerization and conformation changes in the IL-2R subunits resulting in downstream signaling starting with phosphorylation of JAK1 and JAK3. In turn, JAK1 and JAK3 phosphorylate the receptor to form a docking site leading to the phosphorylation of several substrates including STAT5. This process leads to activation of several pathways including STAT, phosphoinositide-3-kinase/PI3K and mitogen-activated protein kinase/MAPK pathways. Functions as a T-cell growth factor and can increase NK-cell cytolytic activity as well. Promotes strong proliferation of activated B-cells and subsequently immunoglobulin production. Plays a pivotal role in regulating the adaptive immune system by controlling the survival and proliferation of regulatory T-cells, which are required for the maintenance of immune tolerance. Moreover, participates in the differentiation and homeostasis of effector T-cell subsets, including Th1, Th2, Th17 as well as memory CD8-positive T-cells. This is Interleukin-2 (IL2) from Equus caballus (Horse).